The chain runs to 675 residues: NADH-quinone oxidoreductase subunit G (675 aa).

Positions 1-78 (MIKLIIDGSE…GMVIHTDTPM (78 aa)) constitute a 2Fe-2S ferredoxin-type domain. Residues Cys34, Cys45, Cys48, and Cys62 each coordinate [2Fe-2S] cluster. One can recognise a 4Fe-4S His(Cys)3-ligated-type domain in the interval 78–117 (MVKKAREGVMEFLLINHPLDCPICDQGGECDLQDQAFRYG). His94, Cys98, Cys101, Cys107, Cys146, Cys149, Cys152, and Cys196 together coordinate [4Fe-4S] cluster. The 57-residue stretch at 215–271 (LKHTASIGVHDAEGSNIRIDSRADEIMRILPRVNEAINEEWLSDKNRFCYDGLKYQR) folds into the 4Fe-4S Mo/W bis-MGD-type domain.

It belongs to the complex I 75 kDa subunit family. The cofactor is [2Fe-2S] cluster. [4Fe-4S] cluster serves as cofactor.

It carries out the reaction a quinone + NADH + 5 H(+)(in) = a quinol + NAD(+) + 4 H(+)(out). Its function is as follows. NDH-1 shuttles electrons from NADH, via FMN and iron-sulfur (Fe-S) centers, to quinones in the respiratory chain. Couples the redox reaction to proton translocation (for every two electrons transferred, four hydrogen ions are translocated across the cytoplasmic membrane), and thus conserves the redox energy in a proton gradient. The polypeptide is NADH-quinone oxidoreductase subunit G (nuoG) (Rickettsia prowazekii (strain Madrid E)).